Here is a 270-residue protein sequence, read N- to C-terminus: NAD kinase (270 aa).

Aspartate 57 (proton acceptor) is an active-site residue. Residues 57–58, 125–126, arginine 150, and asparagine 227 each bind NAD(+); these read DG and NE.

Belongs to the NAD kinase family. The cofactor is a divalent metal cation.

The protein localises to the cytoplasm. It carries out the reaction NAD(+) + ATP = ADP + NADP(+) + H(+). Involved in the regulation of the intracellular balance of NAD and NADP, and is a key enzyme in the biosynthesis of NADP. Catalyzes specifically the phosphorylation on 2'-hydroxyl of the adenosine moiety of NAD to yield NADP. The polypeptide is NAD kinase (Ureaplasma parvum serovar 3 (strain ATCC 700970)).